The primary structure comprises 686 residues: Methionine--tRNA ligase (686 aa).

The 'HIGH' region signature appears at Pro15–His25. Cys146, Cys149, Cys159, and Cys162 together coordinate Zn(2+). Positions Lys332–Ser336 match the 'KMSKS' region motif. Lys335 lines the ATP pocket. A tRNA-binding domain is found at Ala585–Met686.

Belongs to the class-I aminoacyl-tRNA synthetase family. MetG type 1 subfamily. As to quaternary structure, homodimer. The cofactor is Zn(2+).

It is found in the cytoplasm. It catalyses the reaction tRNA(Met) + L-methionine + ATP = L-methionyl-tRNA(Met) + AMP + diphosphate. In terms of biological role, is required not only for elongation of protein synthesis but also for the initiation of all mRNA translation through initiator tRNA(fMet) aminoacylation. The sequence is that of Methionine--tRNA ligase from Aliivibrio fischeri (strain MJ11) (Vibrio fischeri).